A 318-amino-acid chain; its full sequence is tRNA dimethylallyltransferase (318 aa).

Gly9–Thr16 provides a ligand contact to ATP. Thr11 to Thr16 is a substrate binding site. Interaction with substrate tRNA regions lie at residues Asp34–Gln37 and Gln158–Arg162.

Belongs to the IPP transferase family. As to quaternary structure, monomer. Mg(2+) is required as a cofactor.

It catalyses the reaction adenosine(37) in tRNA + dimethylallyl diphosphate = N(6)-dimethylallyladenosine(37) in tRNA + diphosphate. Its function is as follows. Catalyzes the transfer of a dimethylallyl group onto the adenine at position 37 in tRNAs that read codons beginning with uridine, leading to the formation of N6-(dimethylallyl)adenosine (i(6)A). This chain is tRNA dimethylallyltransferase, found in Dichelobacter nodosus (strain VCS1703A).